We begin with the raw amino-acid sequence, 318 residues long: Biotin synthase (318 aa).

Positions 44 to 270 (LCGDAVNLCS…INPTANIRLA (227 aa)) constitute a Radical SAM core domain. C62, C66, and C69 together coordinate [4Fe-4S] cluster. Residues S106, C138, C198, and R268 each contribute to the [2Fe-2S] cluster site.

The protein belongs to the radical SAM superfamily. Biotin synthase family. As to quaternary structure, homodimer. [4Fe-4S] cluster is required as a cofactor. The cofactor is [2Fe-2S] cluster.

It catalyses the reaction (4R,5S)-dethiobiotin + (sulfur carrier)-SH + 2 reduced [2Fe-2S]-[ferredoxin] + 2 S-adenosyl-L-methionine = (sulfur carrier)-H + biotin + 2 5'-deoxyadenosine + 2 L-methionine + 2 oxidized [2Fe-2S]-[ferredoxin]. It functions in the pathway cofactor biosynthesis; biotin biosynthesis; biotin from 7,8-diaminononanoate: step 2/2. Functionally, catalyzes the conversion of dethiobiotin (DTB) to biotin by the insertion of a sulfur atom into dethiobiotin via a radical-based mechanism. The sequence is that of Biotin synthase from Alkaliphilus metalliredigens (strain QYMF).